The chain runs to 630 residues: MAKHQFQTEANQILNLMIHSLYSNKEIFIRELVSNASDALDKLNMLVLTNDEYKGVNFSPRIDIIADKEAKTLTIKDSGIGMNEEDLMNNLGTIAKSGTKAFLENLSGDQKKDSHLIGQFGVGFYASFMVAHKVEVTTKKAATEQAYLWISKGDGEFEIEKTTRESHGTTIVMHLNDDESEFLDSYRIEGIIKKYSNHIPFAIFMDKDKFIPAKKDEDGKEIEPSRNEVENIQINRANALWTISKNEISDEEYKDFYSSIAHSSEEPLAWMHNKAEGAIEYTTLFYIPSKAPMDMYRVDYQTGIKLYINRVFITDDEKELMPTYLRFLRGVIDSKDLPLNVSREILQSNAVMAKIKNASVKKVLSELAKMAKRDAKKYDDFFTQFGNVLKEGLYSDYGNRENILELLKFNTINSDEKIMIEEFIKNVDETKKEIYYITGKTSLSMLKSSPALERFKSRGINVLVLNEEIDTIIFPMVTEYKEYKLIHVNDVKFEENENDKKAQEKSSKEFEGLTKELKESLGDSVKSVEVTFDLVDSPVKLKEDKEDPAFMMAQIMKQMGQSGDTPAPAPILQINPKHELIIKLKNSADINLINDAAHLLLDQAKLFDGVQLEDTAGFVLRLNRVIAKAI.

Residues 1-343 (MAKHQFQTEA…SKDLPLNVSR (343 aa)) are a; substrate-binding. Residues 344-554 (EILQSNAVMA…KEDPAFMMAQ (211 aa)) are b. The segment at 555–630 (IMKQMGQSGD…RLNRVIAKAI (76 aa)) is c.

This sequence belongs to the heat shock protein 90 family. Homodimer.

It localises to the cytoplasm. Molecular chaperone. Has ATPase activity. The polypeptide is Chaperone protein HtpG (Sulfurimonas denitrificans (strain ATCC 33889 / DSM 1251) (Thiomicrospira denitrificans (strain ATCC 33889 / DSM 1251))).